The following is a 345-amino-acid chain: Platelet-derived growth factor C (345 aa).

A signal peptide spans 1–22 (MLLLGLLLLTSALAGRRHGAAA). The 118-residue stretch at 46–163 (HEKIITVTSN…PGFCIHYTLL (118 aa)) folds into the CUB domain. Asparagine 55 carries an N-linked (GlcNAc...) asparagine glycan. 4 disulfides stabilise this stretch: cysteine 104-cysteine 124, cysteine 250-cysteine 294, cysteine 280-cysteine 335, and cysteine 287-cysteine 337.

It belongs to the PDGF/VEGF growth factor family. As to quaternary structure, homodimer; disulfide-linked. Interacts with PDGFRA homodimers, and with heterodimers formed by PDGFRA and PDGFRB. Proteolytic removal of the N-terminal CUB domain releasing the core domain is necessary for unmasking the receptor-binding epitopes of the core domain. Cleavage after basic residues in the hinge region (region connecting the CUB and growth factor domains) gives rise to the receptor-binding form.

It localises to the secreted. Its function is as follows. Growth factor that plays an essential role in the regulation of embryonic development, cell proliferation, cell migration, survival and chemotaxis. Potent mitogen and chemoattractant for cells of mesenchymal origin. Required for normal skeleton formation during embryonic development. Required for normal skin morphogenesis during embryonic development. Plays an important role in wound healing, in angiogenesis and blood vessel development. The protein is Platelet-derived growth factor C (PDGFC) of Gallus gallus (Chicken).